Consider the following 471-residue polypeptide: UTP--glucose-1-phosphate uridylyltransferase (471 aa).

Residues 87–90 (LNGG), Lys101, Gln164, and Gly193 each bind UTP. 89–90 (GG) contacts substrate. Substrate-binding positions include His194 and 222–224 (NSD). 2 residues coordinate UTP: Asp224 and Lys362.

It belongs to the UDPGP type 1 family.

It localises to the cytoplasm. It carries out the reaction alpha-D-glucose 1-phosphate + UTP + H(+) = UDP-alpha-D-glucose + diphosphate. In terms of biological role, plays a central role as a glucosyl donor in cellular metabolic pathways. The chain is UTP--glucose-1-phosphate uridylyltransferase from Pyrus pyrifolia (Chinese pear).